A 108-amino-acid chain; its full sequence is Insertion element IS629 uncharacterized 12 kDa protein S4062 (108 aa).

Belongs to the transposase 8 family.

This Shigella flexneri protein is Insertion element IS629 uncharacterized 12 kDa protein S4062.